The primary structure comprises 228 residues: MIGIIGAMEEEILILKEKITDLEEISIAHVKFYKGYIDNQEVVLTLSGIGKVNAAISTTLLINTFSPDVILNTGSAGALDHSLNIGDVLISTEATYHDADATAFGYELGQIPNMPIAYAADDDLVTLAQSVVEQQEMNGKLGLIVSGDSFIGEVSQRETIKTNFPDAMAVEMEATAIAQTCYQFKVPFIITRAVSDLANGEANMTFDEFIGEAAKSSSEIVLEMLKSL.

The Proton acceptor role is filled by Glu11. Residues Gly77, Ile151, and 172–173 (ME) contribute to the substrate site. Asp196 functions as the Proton donor in the catalytic mechanism.

The protein belongs to the PNP/UDP phosphorylase family. MtnN subfamily.

The catalysed reaction is S-adenosyl-L-homocysteine + H2O = S-(5-deoxy-D-ribos-5-yl)-L-homocysteine + adenine. It carries out the reaction S-methyl-5'-thioadenosine + H2O = 5-(methylsulfanyl)-D-ribose + adenine. It catalyses the reaction 5'-deoxyadenosine + H2O = 5-deoxy-D-ribose + adenine. Its pathway is amino-acid biosynthesis; L-methionine biosynthesis via salvage pathway; S-methyl-5-thio-alpha-D-ribose 1-phosphate from S-methyl-5'-thioadenosine (hydrolase route): step 1/2. Its function is as follows. Catalyzes the irreversible cleavage of the glycosidic bond in both 5'-methylthioadenosine (MTA) and S-adenosylhomocysteine (SAH/AdoHcy) to adenine and the corresponding thioribose, 5'-methylthioribose and S-ribosylhomocysteine, respectively. Also cleaves 5'-deoxyadenosine, a toxic by-product of radical S-adenosylmethionine (SAM) enzymes, into 5-deoxyribose and adenine. In Staphylococcus carnosus (strain TM300), this protein is 5'-methylthioadenosine/S-adenosylhomocysteine nucleosidase.